Here is a 298-residue protein sequence, read N- to C-terminus: uncharacterized protein (298 aa).

Residues 5–62 (TSLSAMRIFEAAARLGSFRAAAEELNLSPSAVSHAIMRLERDLGVALFERTTRSVSLT) form the HTH lysR-type domain. The H-T-H motif DNA-binding region spans 22 to 42 (FRAAAEELNLSPSAVSHAIMR).

This sequence belongs to the LysR transcriptional regulatory family.

This is an uncharacterized protein from Sinorhizobium fredii (strain NBRC 101917 / NGR234).